The sequence spans 218 residues: Ribose-5-phosphate isomerase A (218 aa).

Substrate-binding positions include 28 to 31, 81 to 84, and 94 to 97; these read SGST, DGAD, and KGGG. The Proton acceptor role is filled by Glu-103. Residue Lys-121 participates in substrate binding.

This sequence belongs to the ribose 5-phosphate isomerase family. In terms of assembly, homodimer.

The enzyme catalyses aldehydo-D-ribose 5-phosphate = D-ribulose 5-phosphate. It participates in carbohydrate degradation; pentose phosphate pathway; D-ribose 5-phosphate from D-ribulose 5-phosphate (non-oxidative stage): step 1/1. Catalyzes the reversible conversion of ribose-5-phosphate to ribulose 5-phosphate. This chain is Ribose-5-phosphate isomerase A, found in Dichelobacter nodosus (strain VCS1703A).